Here is a 41-residue protein sequence, read N- to C-terminus: Large ribosomal subunit protein bL36 (41 aa).

Belongs to the bacterial ribosomal protein bL36 family.

This chain is Large ribosomal subunit protein bL36, found in Parvibaculum lavamentivorans (strain DS-1 / DSM 13023 / NCIMB 13966).